The following is a 224-amino-acid chain: MGRGRVELKRIEGKINRQVTFAKRRNGLLKKAYELSVLCDAEVALIIFSNRGKLYEFCSSSSMLKTLERYQKCNYGAPEPNISTREALEISSQQEYLKLKGRYEALQRSQRNLLGEDLGPLNSKELESLERQLDMSLKQIRSTRTQLMLDQLTDYQRKEHALNEANRTLKQRLMEGSQLNLQCSQMHKLWAMAGKQLKLRAMASFILWIVNLLCKLGIRMIQLQ.

The MADS-box domain maps to 3-57 (RGRVELKRIEGKINRQVTFAKRRNGLLKKAYELSVLCDAEVALIIFSNRGKLYEF). Positions 89–179 (EISSQQEYLK…KQRLMEGSQL (91 aa)) constitute a K-box domain.

In terms of tissue distribution, flower specific.

It is found in the nucleus. Functionally, probable transcription factor active in inflorescence development and floral organogenesis. In Solanum lycopersicum (Tomato), this protein is Agamous-like MADS-box protein AGL9 homolog (TDR5).